A 156-amino-acid polypeptide reads, in one-letter code: Small ribosomal subunit protein uS7 (156 aa).

The protein belongs to the universal ribosomal protein uS7 family. In terms of assembly, part of the 30S ribosomal subunit. Contacts proteins S9 and S11.

One of the primary rRNA binding proteins, it binds directly to 16S rRNA where it nucleates assembly of the head domain of the 30S subunit. Is located at the subunit interface close to the decoding center, probably blocks exit of the E-site tRNA. The sequence is that of Small ribosomal subunit protein uS7 from Chlorobaculum parvum (strain DSM 263 / NCIMB 8327) (Chlorobium vibrioforme subsp. thiosulfatophilum).